Reading from the N-terminus, the 106-residue chain is Small ribosomal subunit protein bS20 (106 aa).

The span at 1–20 shows a compositional bias: basic residues; that stretch reads MATAKPKKKNPRLASGRKRV. The disordered stretch occupies residues 1-21; the sequence is MATAKPKKKNPRLASGRKRVR.

It belongs to the bacterial ribosomal protein bS20 family.

Functionally, binds directly to 16S ribosomal RNA. The sequence is that of Small ribosomal subunit protein bS20 from Polaromonas naphthalenivorans (strain CJ2).